Here is a 525-residue protein sequence, read N- to C-terminus: Phosphoenolpyruvate carboxykinase (ATP) (525 aa).

R52, Y186, and K192 together coordinate substrate. ATP is bound by residues K192, H211, and 228–236; that span reads GLSGTGKTT. Mn(2+) is bound by residues K192 and H211. D249 provides a ligand contact to Mn(2+). Residues E277, R314, 433–434, and T439 each bind ATP; that span reads RI. R314 contributes to the substrate binding site.

Belongs to the phosphoenolpyruvate carboxykinase (ATP) family. Mn(2+) is required as a cofactor.

It is found in the cytoplasm. It carries out the reaction oxaloacetate + ATP = phosphoenolpyruvate + ADP + CO2. It participates in carbohydrate biosynthesis; gluconeogenesis. Involved in the gluconeogenesis. Catalyzes the conversion of oxaloacetate (OAA) to phosphoenolpyruvate (PEP) through direct phosphoryl transfer between the nucleoside triphosphate and OAA. The chain is Phosphoenolpyruvate carboxykinase (ATP) from Fusobacterium nucleatum subsp. nucleatum (strain ATCC 25586 / DSM 15643 / BCRC 10681 / CIP 101130 / JCM 8532 / KCTC 2640 / LMG 13131 / VPI 4355).